The primary structure comprises 467 residues: tRNA-2-methylthio-N(6)-dimethylallyladenosine synthase (467 aa).

Residues 1-20 (MSDDTTQIEPAMAQETSPRA) are disordered. An MTTase N-terminal domain is found at 23–143 (RKVFVKTYGC…LPNALARVRG (121 aa)). Cys32, Cys68, Cys106, Cys184, Cys188, and Cys191 together coordinate [4Fe-4S] cluster. A Radical SAM core domain is found at 170–402 (RKRGVSAFLT…QALLSAQQYA (233 aa)). Residues 405–467 (DSMIGRKMDV…TNSLIAQKLA (63 aa)) form the TRAM domain.

The protein belongs to the methylthiotransferase family. MiaB subfamily. Monomer. Requires [4Fe-4S] cluster as cofactor.

It localises to the cytoplasm. It carries out the reaction N(6)-dimethylallyladenosine(37) in tRNA + (sulfur carrier)-SH + AH2 + 2 S-adenosyl-L-methionine = 2-methylsulfanyl-N(6)-dimethylallyladenosine(37) in tRNA + (sulfur carrier)-H + 5'-deoxyadenosine + L-methionine + A + S-adenosyl-L-homocysteine + 2 H(+). Catalyzes the methylthiolation of N6-(dimethylallyl)adenosine (i(6)A), leading to the formation of 2-methylthio-N6-(dimethylallyl)adenosine (ms(2)i(6)A) at position 37 in tRNAs that read codons beginning with uridine. This is tRNA-2-methylthio-N(6)-dimethylallyladenosine synthase from Brucella melitensis biotype 1 (strain ATCC 23456 / CCUG 17765 / NCTC 10094 / 16M).